A 1096-amino-acid polypeptide reads, in one-letter code: Protein spire (1096 aa).

2 disordered regions span residues Met-1 to Thr-79 and Val-184 to Val-211. Over residues Leu-37–Ala-51 the composition is skewed to polar residues. The span at Thr-53 to Gly-65 shows a compositional bias: basic residues. Composition is skewed to low complexity over residues Ala-66–Asn-77 and Gln-189–Pro-201. One can recognise a KIND domain in the interval Val-111–Leu-366. A coiled-coil region spans residues Lys-315 to Asn-340. 2 WH2 domains span residues Pro-436–Val-454 and Pro-500–Ile-517. Disordered regions lie at residues Asp-560 to Ala-588, Gln-614 to Thr-656, and Gln-693 to Trp-762. The span at His-574–Ala-585 shows a compositional bias: basic residues. Composition is skewed to low complexity over residues Ala-633–Ala-645 and Asp-714–Ser-725. The segment covering Glu-737 to His-754 has biased composition (basic and acidic residues). Residues Leu-780–Glu-800 form a spir-box region. Low complexity predominate over residues Pro-874–Thr-894. 3 disordered regions span residues Pro-874–Asp-899, Arg-912–His-958, and Arg-997–Leu-1021. The span at Ser-921–Gly-941 shows a compositional bias: polar residues.

The protein belongs to the spire family. In terms of assembly, interacts with bsk, Rho1, Rac1, Cdc42 and wash. Interacts with capu. In terms of processing, phosphorylated by Jnk kinase (bsk).

The protein resides in the cytoplasm. It localises to the cytoskeleton. Its subcellular location is the perinuclear region. It is found in the cell membrane. The protein localises to the cytoplasmic vesicle membrane. Its function is as follows. Acts as an actin nucleation factor, remains associated with the slow-growing pointed end of the new filament. Promotes dissociation of capu from the barbed end of actin filaments. Involved in intracellular vesicle transport along actin fibers, providing a novel link between actin cytoskeleton dynamics and intracellular transport. Required for localization of determinants within the developing oocyte to the posterior pole and to the dorsal anterior corner. Links Rho family signaling and Jnk function to the actin cytoskeleton. The sequence is that of Protein spire from Drosophila pseudoobscura pseudoobscura (Fruit fly).